A 59-amino-acid polypeptide reads, in one-letter code: Large ribosomal subunit protein bL33 (59 aa).

Belongs to the bacterial ribosomal protein bL33 family.

This chain is Large ribosomal subunit protein bL33, found in Borrelia recurrentis (strain A1).